The sequence spans 558 residues: DNA ligase B (558 aa).

The N6-AMP-lysine intermediate role is filled by lysine 126.

This sequence belongs to the NAD-dependent DNA ligase family. LigB subfamily.

It catalyses the reaction NAD(+) + (deoxyribonucleotide)n-3'-hydroxyl + 5'-phospho-(deoxyribonucleotide)m = (deoxyribonucleotide)n+m + AMP + beta-nicotinamide D-nucleotide.. Functionally, catalyzes the formation of phosphodiester linkages between 5'-phosphoryl and 3'-hydroxyl groups in double-stranded DNA using NAD as a coenzyme and as the energy source for the reaction. In Pseudomonas fluorescens (strain Pf0-1), this protein is DNA ligase B.